A 206-amino-acid polypeptide reads, in one-letter code: Putative NAD(P)H nitroreductase MhqN (206 aa).

FMN contacts are provided by residues 11–13 (RRS), 68–70 (QYK), 157–158 (IG), Arg193, and Arg196.

The protein belongs to the nitroreductase family. As to quaternary structure, homodimer. Requires FMN as cofactor.

It is found in the cytoplasm. In terms of biological role, putative nitroreductase that may contribute to the degradation of aromatic compounds. This is Putative NAD(P)H nitroreductase MhqN (mhqN) from Bacillus subtilis (strain 168).